The chain runs to 103 residues: Large ribosomal subunit protein bL21 (103 aa).

Belongs to the bacterial ribosomal protein bL21 family. In terms of assembly, part of the 50S ribosomal subunit. Contacts protein L20.

In terms of biological role, this protein binds to 23S rRNA in the presence of protein L20. This chain is Large ribosomal subunit protein bL21, found in Acidovorax sp. (strain JS42).